Consider the following 1104-residue polypeptide: SWI/SNF complex subunit SMARCC1 (1104 aa).

The interval 27 to 301 (LAVYRRKDGG…PVSFRQRIST (275 aa)) is marR-like, BRCT and chromo domains module. The region spanning 37 to 163 (PASKFWESPD…IEKTLVQNNC (127 aa)) is the MarR-like domain. The region spanning 167-210 (PNIYLIPDIDLKLANKLKDIIKRHQGTFTDEKSKASHHIYPYPS) is the BRCT; N-terminus domain. Residue Lys178 forms a Glycyl lysine isopeptide (Lys-Gly) (interchain with G-Cter in SUMO2) linkage. The Chromo domain maps to 216 to 244 (EWLRPVMRRDKQVLVHWGFYPDSYDTWVH). Residues 260-284 (KPWKVHVKWILDTDVFNEWMNEEDY) enclose the BRCT; C-terminus domain. Residues 295–445 (FRQRISTKNE…PGEDNVTEQT (151 aa)) form a disordered region. A compositionally biased stretch (basic and acidic residues) spans 301–317 (TKNEEPVRSPERRDRKA). Ser309, Ser327, and Ser329 each carry phosphoserine. At Thr334 the chain carries Phosphothreonine. Lys344 and Lys345 each carry N6-acetyllysine. Ser349 carries the post-translational modification Phosphoserine. Lys353 carries the N6-acetyllysine modification. Ser356 is subject to Phosphoserine. Residue Lys358 is modified to N6-acetyllysine; alternate. A Glycyl lysine isopeptide (Lys-Gly) (interchain with G-Cter in SUMO2); alternate cross-link involves residue Lys358. Phosphothreonine is present on Thr397. One can recognise an SWIRM domain in the interval 448–545 (IIIPSYASWF…YQVDPESRPM (98 aa)). Phosphoserine is present on Ser572. Lys591 participates in a covalent cross-link: Glycyl lysine isopeptide (Lys-Gly) (interchain with G-Cter in SUMO2). Positions 617-668 (SAGREWTEQETLLLLEALEMYKDDWNKVSEHVGSRTQDECILHFLRLPIEDP) constitute an SANT domain. Residue Lys738 forms a Glycyl lysine isopeptide (Lys-Gly) (interchain with G-Cter in SUMO2) linkage. The interval 744 to 859 (ARASGKVDPT…DAGKKKVEHE (116 aa)) is disordered. Ser775 carries the phosphoserine modification. Acidic residues predominate over residues 775–784 (SEEEKMETDP). Residues 788–859 (QPEKAENKVE…DAGKKKVEHE (72 aa)) are compositionally biased toward basic and acidic residues. Lys795 is covalently cross-linked (Glycyl lysine isopeptide (Lys-Gly) (interchain with G-Cter in SUMO2)). 2 positions are modified to phosphoserine: Ser821 and Ser824. Residues Lys828 and Lys855 each participate in a glycyl lysine isopeptide (Lys-Gly) (interchain with G-Cter in SUMO2) cross-link. Residues 909–945 (KLRHFEELETIMDREKEALEQQRQQLLTERQNFHMEQ) are a coiled coil. Lys947 is modified (N6-acetyllysine). Disordered stretches follow at residues 955–1021 (QQME…PGPG) and 1041–1104 (IHPT…SATP). Over residues 956–973 (QMEQQQQHGQTPQQAHQH) the composition is skewed to low complexity. Composition is skewed to pro residues over residues 994 to 1017 (QQPPPYPLMHHQMPPPHPPQPGQI) and 1048 to 1057 (PTPPGMPPMP). The residue at position 1064 (Arg1064) is an Asymmetric dimethylarginine. Residues 1073–1104 (MYPPPPQQQQPPPPADGVPPPPAPGPPASATP) show a composition bias toward pro residues.

The protein belongs to the SMARCC family. In terms of assembly, component of the multiprotein chromatin-remodeling complexes SWI/SNF: SWI/SNF-A (BAF), SWI/SNF-B (PBAF) and related complexes. The canonical complex contains a catalytic subunit (either SMARCA4/BRG1/BAF190A or SMARCA2/BRM/BAF190B) and at least SMARCE1, ACTL6A/BAF53, SMARCC1/BAF155, SMARCC2/BAF170, and SMARCB1/SNF5/BAF47. Other subunits specific to each of the complexes may also be present permitting several possible combinations developmentally and tissue specific. Component of the BAF complex, which includes at least actin (ACTB), ARID1A/BAF250A, ARID1B/BAF250B, SMARCA2/BRM, SMARCA4/BRG1, ACTL6A/BAF53, ACTL6B/BAF53B, SMARCE1/BAF57, SMARCC1/BAF155, SMARCC2/BAF170, SMARCB1/SNF5/INI1, and one or more SMARCD1/BAF60A, SMARCD2/BAF60B, or SMARCD3/BAF60C. In muscle cells, the BAF complex also contains DPF3. Component of neural progenitors-specific chromatin remodeling complex (npBAF complex) composed of at least, ARID1A/BAF250A or ARID1B/BAF250B, SMARCD1/BAF60A, SMARCD3/BAF60C, SMARCA2/BRM/BAF190B, SMARCA4/BRG1/BAF190A, SMARCB1/BAF47, SMARCC1/BAF155, SMARCE1/BAF57, SMARCC2/BAF170, PHF10/BAF45A, ACTL6A/BAF53A and actin. Component of neuron-specific chromatin remodeling complex (nBAF complex) composed of at least, ARID1A/BAF250A or ARID1B/BAF250B, SMARCD1/BAF60A, SMARCD3/BAF60C, SMARCA2/BRM/BAF190B, SMARCA4/BRG1/BAF190A, SMARCB1/BAF47, SMARCC1/BAF155, SMARCE1/BAF57, SMARCC2/BAF170, DPF1/BAF45B, DPF3/BAF45C, ACTL6B/BAF53B and actin. Component of the SWI/SNF-B (PBAF) chromatin remodeling complex, at least composed of SMARCA4/BRG1, SMARCB1/BAF47/SNF5, ACTL6A/BAF53A or ACTL6B/BAF53B, SMARCE1/BAF57, SMARCD1/BAF60A, SMARCD2/BAF60B, perhaps SMARCD3/BAF60C, SMARCC1/BAF155, SMARCC2/BAF170, PBRM1/BAF180, ARID2/BAF200 and actin. Component of SWI/SNF (GBAF) subcomplex, which includes at least BICRA or BICRAL (mutually exclusive), BRD9, SS18, SMARCA2/BRM, SMARCA4/BRG1/BAF190A, ACTL6A/BAF53, SMARCC1/BAF155, and SMARCD1/BAF60A. May also interact with the SIN3A histone deacetylase transcription repressor complex in conjunction with SMARCA2 and SMARCA4. The minimal complex composed of SMARCC1 and SMARCA4 seems to be able to associate with cyclin such as CCNE1 or transcription factors such as KLF1 or GATA1. Interacts with NR3C1 and SMARD1. Interacts with TRIP12; leading to disrupt interaction between TRIP12 and SMARCE1 and prevent SMARCE1 ubiquitination. Interacts with CEBPB (when not methylated). Interacts with KDM6B. Interacts with MKKS; the interaction takes place predominantly in the cytoplasm and may modulate SMARCC1 location. Interacts with DPF2. Interacts with PRDM1/BLIMP1. Interacts with DPF3a (isoform 2 of DPF3/BAF45C) and with HDGFL2 in a DPF3a-dependent manner. In terms of tissue distribution, highly expressed in adult brain, testis and thymus.

The protein resides in the nucleus. Its subcellular location is the cytoplasm. Its function is as follows. Involved in transcriptional activation and repression of select genes by chromatin remodeling (alteration of DNA-nucleosome topology). Component of SWI/SNF chromatin remodeling complexes that carry out key enzymatic activities, changing chromatin structure by altering DNA-histone contacts within a nucleosome in an ATP-dependent manner. May stimulate the ATPase activity of the catalytic subunit of the complex. Belongs to the neural progenitors-specific chromatin remodeling complex (npBAF complex) and the neuron-specific chromatin remodeling complex (nBAF complex). During neural development a switch from a stem/progenitor to a postmitotic chromatin remodeling mechanism occurs as neurons exit the cell cycle and become committed to their adult state. The transition from proliferating neural stem/progenitor cells to postmitotic neurons requires a switch in subunit composition of the npBAF and nBAF complexes. As neural progenitors exit mitosis and differentiate into neurons, npBAF complexes which contain ACTL6A/BAF53A and PHF10/BAF45A, are exchanged for homologous alternative ACTL6B/BAF53B and DPF1/BAF45B or DPF3/BAF45C subunits in neuron-specific complexes (nBAF). The npBAF complex is essential for the self-renewal/proliferative capacity of the multipotent neural stem cells. The nBAF complex along with CREST plays a role regulating the activity of genes essential for dendrite growth. This Mus musculus (Mouse) protein is SWI/SNF complex subunit SMARCC1 (Smarcc1).